We begin with the raw amino-acid sequence, 251 residues long: Ditrans,polycis-undecaprenyl-diphosphate synthase ((2E,6E)-farnesyl-diphosphate specific) (251 aa).

Residue D29 is part of the active site. D29 contacts Mg(2+). Residues 30 to 33 (GNGK), W34, R42, H46, and 74 to 76 (SSD) contribute to the substrate site. Residue N77 is the Proton acceptor of the active site. Residues W78, R80, R197, and 203 to 205 (RLS) each bind substrate. E216 provides a ligand contact to Mg(2+).

Belongs to the UPP synthase family. In terms of assembly, homodimer. Requires Mg(2+) as cofactor.

It catalyses the reaction 8 isopentenyl diphosphate + (2E,6E)-farnesyl diphosphate = di-trans,octa-cis-undecaprenyl diphosphate + 8 diphosphate. Catalyzes the sequential condensation of isopentenyl diphosphate (IPP) with (2E,6E)-farnesyl diphosphate (E,E-FPP) to yield (2Z,6Z,10Z,14Z,18Z,22Z,26Z,30Z,34E,38E)-undecaprenyl diphosphate (di-trans,octa-cis-UPP). UPP is the precursor of glycosyl carrier lipid in the biosynthesis of bacterial cell wall polysaccharide components such as peptidoglycan and lipopolysaccharide. The protein is Ditrans,polycis-undecaprenyl-diphosphate synthase ((2E,6E)-farnesyl-diphosphate specific) of Buchnera aphidicola subsp. Baizongia pistaciae (strain Bp).